The following is a 343-amino-acid chain: Envelope glycoprotein K (343 aa).

A signal peptide spans Met-1–Gln-31. At Leu-32 to Tyr-118 the chain is on the extracellular side. Asn-57 and Asn-89 each carry an N-linked (GlcNAc...) asparagine; by host glycan. Residues Leu-119–Cys-139 form a helical membrane-spanning segment. Residues Leu-140–Ser-213 are Cytoplasmic-facing. Residues Ala-214 to Val-234 form a helical membrane-spanning segment. Topologically, residues Gly-235 to Tyr-251 are extracellular. Residues Leu-252–Ile-272 form a helical membrane-spanning segment. The Cytoplasmic segment spans residues Tyr-273–Thr-303. The chain crosses the membrane as a helical span at residues Val-304–Ile-324. The Extracellular segment spans residues Leu-325 to Ser-343.

It belongs to the alphaherpesvirinae glycoprotein K family. As to quaternary structure, interacts (via UL20 interaction region) with protein UL20 homolog (via N-terminus); this interaction probably plays a role in the coordinate transport of protein UL20 homolog and gK to the trans-Golgi network (TGN), and is required for the cell surface expression of gK. N-glycosylated.

It is found in the host cell membrane. The protein localises to the host endosome membrane. Its subcellular location is the host Golgi apparatus membrane. In terms of biological role, glycoprotein that probably modulates membrane fusion events during secondary envelopment of cytoplasmic capsids that bud into specific trans-Golgi network (TGN)-derived membranes. The chain is Envelope glycoprotein K (gK) from Equine herpesvirus 1 (strain Ab4p) (EHV-1).